A 430-amino-acid polypeptide reads, in one-letter code: tRNA(Ile)-lysidine synthase (430 aa).

27–32 lines the ATP pocket; sequence SGGSDS.

Belongs to the tRNA(Ile)-lysidine synthase family.

Its subcellular location is the cytoplasm. It catalyses the reaction cytidine(34) in tRNA(Ile2) + L-lysine + ATP = lysidine(34) in tRNA(Ile2) + AMP + diphosphate + H(+). Ligates lysine onto the cytidine present at position 34 of the AUA codon-specific tRNA(Ile) that contains the anticodon CAU, in an ATP-dependent manner. Cytidine is converted to lysidine, thus changing the amino acid specificity of the tRNA from methionine to isoleucine. In Rickettsia akari (strain Hartford), this protein is tRNA(Ile)-lysidine synthase.